Reading from the N-terminus, the 436-residue chain is Enolase (436 aa).

Gln-167 serves as a coordination point for (2R)-2-phosphoglycerate. Glu-209 acts as the Proton donor in catalysis. Residues Asp-246, Glu-291, and Asp-318 each coordinate Mg(2+). Positions 343, 372, 373, and 394 each coordinate (2R)-2-phosphoglycerate. The active-site Proton acceptor is the Lys-343.

This sequence belongs to the enolase family. Component of the RNA degradosome, a multiprotein complex involved in RNA processing and mRNA degradation. It depends on Mg(2+) as a cofactor.

The protein localises to the cytoplasm. It is found in the secreted. Its subcellular location is the cell surface. It carries out the reaction (2R)-2-phosphoglycerate = phosphoenolpyruvate + H2O. The protein operates within carbohydrate degradation; glycolysis; pyruvate from D-glyceraldehyde 3-phosphate: step 4/5. Its function is as follows. Catalyzes the reversible conversion of 2-phosphoglycerate (2-PG) into phosphoenolpyruvate (PEP). It is essential for the degradation of carbohydrates via glycolysis. The chain is Enolase from Actinobacillus pleuropneumoniae serotype 3 (strain JL03).